Consider the following 143-residue polypeptide: Papain inhibitor (143 aa).

The first 33 residues, 1 to 33 (MREFRRVRRVRFAACALVAAATGITLAAGPASA), serve as a signal peptide directing secretion.

Monomer.

It localises to the secreted. Functionally, stress protein produced under hyperthermal stress conditions. Serves as a glutamine and lysine donor substrate for transglutaminase. Inhibits the cysteine proteases papain and bromelain as well as the bovine serine protease trypsin. Has hardly any or no effect on subtilisin, bovine chymotrypsin, proteinase K from T.album, transglutaminase-activating metalloproteinase (TAMEP) from S.mobaraensis, dispase from B.polymyxa, thermolysin from B.thermoproteolyticus or collagenase from C.histolyticum. The polypeptide is Papain inhibitor (pi) (Streptomyces mobaraensis (Streptoverticillium mobaraense)).